A 372-amino-acid polypeptide reads, in one-letter code: Lipoyl synthase, mitochondrial (372 aa).

A mitochondrion-targeting transit peptide spans 1 to 27 (MSLRCGGAVRTVGPRVFGRYVFSPVRE). 7 residues coordinate [4Fe-4S] cluster: Cys106, Cys111, Cys117, Cys137, Cys141, Cys144, and Ser352. A Radical SAM core domain is found at 122–341 (EYATATATIM…EKVGNELGFH (220 aa)).

This sequence belongs to the radical SAM superfamily. Lipoyl synthase family. Requires [4Fe-4S] cluster as cofactor.

The protein resides in the mitochondrion. The catalysed reaction is [[Fe-S] cluster scaffold protein carrying a second [4Fe-4S](2+) cluster] + N(6)-octanoyl-L-lysyl-[protein] + 2 oxidized [2Fe-2S]-[ferredoxin] + 2 S-adenosyl-L-methionine + 4 H(+) = [[Fe-S] cluster scaffold protein] + N(6)-[(R)-dihydrolipoyl]-L-lysyl-[protein] + 4 Fe(3+) + 2 hydrogen sulfide + 2 5'-deoxyadenosine + 2 L-methionine + 2 reduced [2Fe-2S]-[ferredoxin]. It functions in the pathway protein modification; protein lipoylation via endogenous pathway; protein N(6)-(lipoyl)lysine from octanoyl-[acyl-carrier-protein]: step 2/2. Catalyzes the radical-mediated insertion of two sulfur atoms into the C-6 and C-8 positions of the octanoyl moiety bound to the lipoyl domains of lipoate-dependent enzymes, thereby converting the octanoylated domains into lipoylated derivatives. The sequence is that of Lipoyl synthase, mitochondrial from Bos taurus (Bovine).